Here is a 112-residue protein sequence, read N- to C-terminus: SPbeta prophage-derived uncharacterized protein YoqB (112 aa).

In Bacillus subtilis (strain 168), this protein is SPbeta prophage-derived uncharacterized protein YoqB (yoqB).